We begin with the raw amino-acid sequence, 553 residues long: Threonylcarbamoyladenosine tRNA methylthiotransferase (553 aa).

Positions 21–61 (SAEDVKPQERYQNKKSVTVRAKKRVQIKPETDAEEKPTPRP) are disordered. Composition is skewed to basic and acidic residues over residues 23 to 32 (EDVKPQERYQ) and 47 to 58 (IKPETDAEEKPT). The MTTase N-terminal domain occupies 72–179 (QKVFVKTWGC…VVEVVEETLK (108 aa)). The [4Fe-4S] cluster site is built by Cys81, Cys116, Cys145, Cys221, Cys225, and Cys228. One can recognise a Radical SAM core domain in the interval 207–438 (RKNPLIEIIS…DLFYSYEPYA (232 aa)). The TRAM domain maps to 438 to 500 (AQRVGEMYTV…KFSMVGEILD (63 aa)). A helical transmembrane segment spans residues 533–553 (VGIALVVGSLAFLLQLLIRFL).

Belongs to the methylthiotransferase family. CDKAL1 subfamily. It depends on [4Fe-4S] cluster as a cofactor.

Its subcellular location is the membrane. It carries out the reaction N(6)-L-threonylcarbamoyladenosine(37) in tRNA + (sulfur carrier)-SH + AH2 + 2 S-adenosyl-L-methionine = 2-methylsulfanyl-N(6)-L-threonylcarbamoyladenosine(37) in tRNA + (sulfur carrier)-H + 5'-deoxyadenosine + L-methionine + A + S-adenosyl-L-homocysteine + 2 H(+). Functionally, catalyzes the methylthiolation of N6-threonylcarbamoyladenosine (t(6)A), leading to the formation of 2-methylthio-N6-threonylcarbamoyladenosine (ms(2)t(6)A) at position 37 in tRNAs that read codons beginning with adenine. In Drosophila pseudoobscura pseudoobscura (Fruit fly), this protein is Threonylcarbamoyladenosine tRNA methylthiotransferase.